Reading from the N-terminus, the 228-residue chain is UPF0173 metal-dependent hydrolase BLi03080/BL00413 (228 aa).

Belongs to the UPF0173 family.

In Bacillus licheniformis (strain ATCC 14580 / DSM 13 / JCM 2505 / CCUG 7422 / NBRC 12200 / NCIMB 9375 / NCTC 10341 / NRRL NRS-1264 / Gibson 46), this protein is UPF0173 metal-dependent hydrolase BLi03080/BL00413.